The following is a 793-amino-acid chain: Protocadherin beta-7 (793 aa).

Positions 1–26 (MEARVERAVQKRQVLFLCVFLGMSWA) are cleaved as a signal peptide. Over 27-688 (GAEPLRYFVA…DQANSLTVYL (662 aa)) the chain is Extracellular. Cadherin domains lie at 35–133 (VAEE…APVF), 138–242 (ISLK…APDF), 247–347 (YKVQ…RPEL), 352–451 (LTSP…APAF), and 456–561 (YTLF…SPFV). Asn-169 carries N-linked (GlcNAc...) asparagine glycosylation. 2 N-linked (GlcNAc...) asparagine glycosylation sites follow: Asn-418 and Asn-436. An N-linked (GlcNAc...) asparagine glycan is attached at Asn-567. The 104-residue stretch at 568-671 (SSAPCTEPLP…LVDGFSQPYL (104 aa)) folds into the Cadherin 6 domain. Residues 689-709 (VVALASVSSLFLLSVLLFVAV) traverse the membrane as a helical segment. At 710-793 (RLCRRSRAAP…NRPFQNNLGF (84 aa)) the chain is on the cytoplasmic side.

It localises to the cell membrane. Its function is as follows. Potential calcium-dependent cell-adhesion protein. May be involved in the establishment and maintenance of specific neuronal connections in the brain. In Homo sapiens (Human), this protein is Protocadherin beta-7 (PCDHB7).